The chain runs to 96 residues: Protein Vpr (96 aa).

The tract at residues 1–42 (MEQAPENQGPQREPYNEWTLELLEELKSEAVRHFPRIWLHSL) is homooligomerization. A phosphoserine; by host mark is found at S79, S94, and S96.

This sequence belongs to the HIV-1 VPR protein family. As to quaternary structure, homooligomer, may form homodimer. Interacts with p6-gag region of the Pr55 Gag precursor protein through a (Leu-X-X)4 motif near the C-terminus of the P6gag protein. Interacts with host UNG. May interact with host RAD23A/HHR23A. Interacts with host VPRBP/DCAF1, leading to hijack the CUL4A-RBX1-DDB1-DCAF1/VPRBP complex, mediating ubiquitination of host proteins such as TERT and ZGPAT and arrest of the cell cycle in G2 phase. Phosphorylated on several residues by host. These phosphorylations regulate VPR activity for the nuclear import of the HIV-1 pre-integration complex.

It is found in the virion. Its subcellular location is the host nucleus. The protein localises to the host extracellular space. In terms of biological role, during virus replication, may deplete host UNG protein, and incude G2-M cell cycle arrest. Acts by targeting specific host proteins for degradation by the 26S proteasome, through association with the cellular CUL4A-DDB1 E3 ligase complex by direct interaction with host VPRPB/DCAF-1. Cell cycle arrest reportedly occurs within hours of infection and is not blocked by antiviral agents, suggesting that it is initiated by the VPR carried into the virion. Additionally, VPR induces apoptosis in a cell cycle dependent manner suggesting that these two effects are mechanistically linked. Detected in the serum and cerebrospinal fluid of AIDS patient, VPR may also induce cell death to bystander cells. Functionally, during virus entry, plays a role in the transport of the viral pre-integration (PIC) complex to the host nucleus. This function is crucial for viral infection of non-dividing macrophages. May act directly at the nuclear pore complex, by binding nucleoporins phenylalanine-glycine (FG)-repeat regions. The sequence is that of Protein Vpr from Human immunodeficiency virus type 1 group M subtype B (isolate SF33) (HIV-1).